The sequence spans 443 residues: Postreplication repair E3 ubiquitin-protein ligase rad18 (443 aa).

The RING-type zinc finger occupies 30–68; the sequence is CQVCKDFFDNPVITSCSHTFCSLCIRRCLSTEGKCPTCR. A disordered region spans residues 106–157; that stretch reads GTDDSGDLAAEEPASKKRKIEPNAIVGTDGLPEEGIRTRSQSRGASRQPQAT. Polar residues predominate over residues 143-157; that stretch reads TRSQSRGASRQPQAT. The UBZ4-type zinc-finger motif lies at 175 to 202; sequence LVPCPVCGRRMKEEAVFRHLDSCTGTAE. C178, C181, H193, and C197 together coordinate Zn(2+). Residues 239 to 273 enclose the SAP domain; the sequence is LKDTVLRKKLKDLGIPNWGPRALLQRRHTEWLNLW. Composition is skewed to polar residues over residues 350–363 and 431–443; these read IPNASQANSDTPRS and PISSSASTHKTPH. The segment at 350–443 is disordered; it reads IPNASQANSD…SSASTHKTPH (94 aa).

This sequence belongs to the RAD18 family. As to quaternary structure, interacts with E2 UBC2, forming a complex with ubiquitin ligase activity.

The protein resides in the nucleus. It catalyses the reaction S-ubiquitinyl-[E2 ubiquitin-conjugating enzyme]-L-cysteine + [acceptor protein]-L-lysine = [E2 ubiquitin-conjugating enzyme]-L-cysteine + N(6)-ubiquitinyl-[acceptor protein]-L-lysine.. The protein operates within protein modification; protein ubiquitination. Its function is as follows. E3 RING-finger protein, member of the UBC2/RAD6 epistasis group. Associates to the E2 ubiquitin conjugating enzyme UBC2/RAD6 to form the UBC2-RAD18 ubiquitin ligase complex involved in postreplicative repair (PRR) of damaged DNA. In Emericella nidulans (strain FGSC A4 / ATCC 38163 / CBS 112.46 / NRRL 194 / M139) (Aspergillus nidulans), this protein is Postreplication repair E3 ubiquitin-protein ligase rad18 (uvsH).